The chain runs to 797 residues: Speckle targeted PIP5K1A-regulated poly(A) polymerase (797 aa).

The Matrin-type zinc finger occupies 14 to 44 (FHCNLCHVNIPNRPSLEDHVKGKKHLHLLRL). One can recognise an RRM domain in the interval 54–126 (NSVFVSGFKA…LKLRVKPREK (73 aa)). Residue serine 205 coordinates ATP. Positions 216 and 218 each coordinate Mg(2+). Residues aspartate 216, aspartate 218, asparagine 319, arginine 341, tyrosine 363, and histidine 495 each coordinate UTP. Asparagine 319 serves as a coordination point for ATP. The PAP-associated domain occupies 421–495 (DLCTLLFGFF…NVLDPFELNH (75 aa)). Residues 544 to 787 (QSEAAASSQP…FLPKMAETIM (244 aa)) are KA1; binds the bulging loops of U6 snRNA but is dispensable for terminal uridylyltransferase activity. A disordered region spans residues 611-659 (EETQSLDKTDKSGSEMEVNNNRSLEDTNIQVKGEAGKKRPLSVEEGPST). The segment covering 615–624 (SLDKTDKSGS) has biased composition (basic and acidic residues). Residues 627–640 (EVNNNRSLEDTNIQ) show a composition bias toward polar residues.

The protein belongs to the DNA polymerase type-B-like family. As to quaternary structure, associates with the cleavage and polyadenylation specificity factor (CPSF) complex. Mg(2+) is required as a cofactor. The cofactor is Mn(2+).

It is found in the nucleus. The protein resides in the nucleolus. The protein localises to the nucleus speckle. It carries out the reaction RNA(n) + UTP = RNA(n)-3'-uridine ribonucleotide + diphosphate. The catalysed reaction is RNA(n) + ATP = RNA(n)-3'-adenine ribonucleotide + diphosphate. Poly(A) polymerase that creates the 3'-poly(A) tail of specific pre-mRNAs. In addition to polyadenylation, it is also required for the 3'-end cleavage of pre-mRNAs: binds to the 3'UTR of targeted pre-mRNAs and promotes the recruitment and assembly of the CPSF complex on the 3'UTR of pre-mRNAs. In addition to adenylyltransferase activity, also has uridylyltransferase activity. However, the ATP ratio is higher than UTP in cells, suggesting that it functions primarily as a poly(A) polymerase. This is Speckle targeted PIP5K1A-regulated poly(A) polymerase (tut1) from Danio rerio (Zebrafish).